The chain runs to 383 residues: Protein KES1 (383 aa).

Residues 317–339 show a composition bias toward basic and acidic residues; the sequence is FETASKDKARIENAQRQKRKDEA. A disordered region spans residues 317–346; it reads FETASKDKARIENAQRQKRKDEAAAGTPHQ.

Belongs to the OSBP family.

Its function is as follows. Lipid transporter involved in lipid countertransport between the Golgi complex and membranes of the endoplasmic reticulum: specifically exchanges sterol with phosphatidylinositol 4-phosphate (PI4P), delivering sterol to the Golgi in exchange for PI4P, which is degraded by the SAC1 phosphatase in the endoplasmic reticulum. The chain is Protein KES1 (KES1) from Mycosarcoma maydis (Corn smut fungus).